A 75-amino-acid chain; its full sequence is Protein BRICK1 (75 aa).

Residue A2 is modified to N-acetylalanine. Residues 41 to 72 (MSCRSRLATLNEKLTALERRIEYIEARVTKGE) are a coiled coil.

Belongs to the BRK1 family. Homotrimer when in free form. Directly interacts with WASF2. Component of the WAVE1 complex composed of ABI2, CYFIP1 or CYFIP2, BRK1, NCKAP1 and WASF1/WAVE1. Within the complex, a heterodimer containing NCKAP1 and CYFIP1 interacts with a heterotrimer formed by WAVE1, ABI2 and BRK1.

The protein resides in the cytoplasm. It is found in the cytoskeleton. Functionally, involved in regulation of actin and microtubule organization. Part of a WAVE complex that activates the Arp2/3 complex. As component of the WAVE1 complex, required for BDNF-NTRK2 endocytic trafficking and signaling from early endosomes. This is Protein BRICK1 (BRK1) from Homo sapiens (Human).